The primary structure comprises 961 residues: MSSSIDLLKLIAEKGADSQSAQDIVDNQVAQQLSAQIEYAKRSKKINVRNKLSIEEADAFRDRYGGAFDLNLTQQYHAPHSLAGALRVAEHYDCLDSFPPEDPVIDFGGSWWHHFSRRDKRVHSCCPVLGVRDAARHEERMCRMRKILQESDDFDEVPNFCLNRAQDCDVQADWAICIHGGYDMGFQGLCDAMHSHGVRVLRGTVMFDGAMLFDREGFLPLLKCHWQRDGSGADEVIKFDFENESTLSYIHGWQDLGSFFTESVHCIDGTTYLLEREMLKCNIMTYKIIATNLRCPRETLRHCVWFEDISKYVGVSIPEDWSLNRWKCVRVAKTTVREVEEIAFRCFKESKEWTENMKAVASILSAKSSTVIINGQAIMAGERLDIEDYHLVAFALTLNLYQKYEKLTALRDGMEWKGWCHHFKTRFWWGGDSSRAKVGWLRTLASRFPLLRLDSYADSFKFLTRLSNVEEFEQDSVPISRLRTFWTEEDLFDRLEHEVQTAKTKRSKKKAKVPPAAEIPQEEFHDAPESSSPESVSDDVKPVTDVVPDAEVSVEVPTDPRGISRHGAMKEFVRYCKRLHNNSESNLRHLWDISGGRGSEIANKSIFETYHRIDDMVNVHLANGNWLYPKKYDYTVGYNEHGLGPKHADETYIVDKTCACSNLRDIAEASAKVSVPTCDISMVDGVAGCGKTTAIKDAFRMGEDLIVTANRKSAEDVRMALFPDTYNSKVALDVVRTADSAIMHGVPSCHRLLVDEAGLLHYGQLLVVAALSKCSQVLAFGDTEQISFKSRDAGFKLLHGNLQYDRRDVVHKTYRCPQDVIAAVNLLKRKCGNRDTKYQSWTSESKVSRSLTKRRITSGLQVTIDPNRTYLTMTQADKAALQTRAKDFPVSKDWIDGHIKTVHEAQGISVDNVTLVRLKSTKCDLFKHEEYCLVALTRHKKSFEYCFNGELAGDLIFNCVK.

The segment at Val48–Ala380 is methyltransferase. Residues Asn71–Phe260 form the Alphavirus-like MT domain. A membrane association region spans residues Val392–Ala409. The segment covering Lys503 to Lys512 has biased composition (basic residues). The tract at residues Lys503–Lys541 is disordered. The 156-residue stretch at Asp655–Val810 folds into the (+)RNA virus helicase ATP-binding domain. The ATP-dependent helicase stretch occupies residues Met682–Cys946. Gly685–Thr692 is a binding site for ATP. Positions His811 to Lys961 constitute a (+)RNA virus helicase C-terminal domain.

It belongs to the bromoviridae replication protein 1a family. Interacts with RNA-directed RNA polymerase 2a.

The protein localises to the host endoplasmic reticulum membrane. In terms of biological role, involved in the virus replication. Contains a helicase domain and a methyltransferase domain. The methyltransferase domain is probably involved in viral RNA capping. Involved in the formation of ER membrane spherular invaginations in which RNA replication complexes form. The polypeptide is Replication protein 1a (Bromus inermis (Smooth brome grass)).